The chain runs to 142 residues: Putative pre-16S rRNA nuclease (142 aa).

The protein belongs to the YqgF nuclease family.

It localises to the cytoplasm. In terms of biological role, could be a nuclease involved in processing of the 5'-end of pre-16S rRNA. The polypeptide is Putative pre-16S rRNA nuclease (Nitratidesulfovibrio vulgaris (strain DSM 19637 / Miyazaki F) (Desulfovibrio vulgaris)).